A 151-amino-acid chain; its full sequence is Transcriptional repressor NrdR (151 aa).

The segment at 3–34 (CPFCGYSESKVVDSRSTEDNMAIRRRRECLEC) is a zinc-finger region. An ATP-cone domain is found at 49–139 (ILVIKKDSSR…VYRQFKDINT (91 aa)).

Belongs to the NrdR family. Requires Zn(2+) as cofactor.

In terms of biological role, negatively regulates transcription of bacterial ribonucleotide reductase nrd genes and operons by binding to NrdR-boxes. In Clostridium acetobutylicum (strain ATCC 824 / DSM 792 / JCM 1419 / IAM 19013 / LMG 5710 / NBRC 13948 / NRRL B-527 / VKM B-1787 / 2291 / W), this protein is Transcriptional repressor NrdR.